We begin with the raw amino-acid sequence, 144 residues long: Putative acetyltransferase SAOUHSC_00995 (144 aa).

The N-acetyltransferase domain occupies methionine 1 to threonine 141. Residues valine 71–valine 73, glycine 79, and proline 112–tyrosine 114 each bind CoA.

Belongs to the UPF0039 (ElaA) family.

In terms of biological role, could catalyze the transfer of an acetyl group from acetyl coenzyme A (AcCoA) to an acceptor substrate and release both CoA and the acetylated product. The protein is Putative acetyltransferase SAOUHSC_00995 of Staphylococcus aureus (strain NCTC 8325 / PS 47).